The primary structure comprises 473 residues: Ribulose bisphosphate carboxylase large chain (473 aa).

2 residues coordinate substrate: Asn116 and Thr166. Lys168 functions as the Proton acceptor in the catalytic mechanism. Lys170 is a binding site for substrate. Residues Lys194, Asp196, and Glu197 each coordinate Mg(2+). Lys194 carries the post-translational modification N6-carboxylysine. The active-site Proton acceptor is His287. The substrate site is built by Arg288, His320, and Ser372.

Belongs to the RuBisCO large chain family. Type I subfamily. As to quaternary structure, heterohexadecamer of 8 large chains and 8 small chains. Mg(2+) is required as a cofactor.

The enzyme catalyses 2 (2R)-3-phosphoglycerate + 2 H(+) = D-ribulose 1,5-bisphosphate + CO2 + H2O. It catalyses the reaction D-ribulose 1,5-bisphosphate + O2 = 2-phosphoglycolate + (2R)-3-phosphoglycerate + 2 H(+). Functionally, ruBisCO catalyzes two reactions: the carboxylation of D-ribulose 1,5-bisphosphate, the primary event in carbon dioxide fixation, as well as the oxidative fragmentation of the pentose substrate. Both reactions occur simultaneously and in competition at the same active site. In Nitrosospira sp. (strain TCH716), this protein is Ribulose bisphosphate carboxylase large chain.